The primary structure comprises 233 residues: 2,3-bisphosphoglycerate-dependent phosphoglycerate mutase (233 aa).

Substrate-binding positions include 8–15 (RHGQSLWN), 21–22 (TG), Arg-60, 116–119 (ERYY), Lys-127, 143–144 (RR), and 187–188 (GN). Catalysis depends on His-9, which acts as the Tele-phosphohistidine intermediate. The active-site Proton donor/acceptor is Glu-116.

The protein belongs to the phosphoglycerate mutase family. BPG-dependent PGAM subfamily.

It carries out the reaction (2R)-2-phosphoglycerate = (2R)-3-phosphoglycerate. It participates in carbohydrate degradation; glycolysis; pyruvate from D-glyceraldehyde 3-phosphate: step 3/5. Catalyzes the interconversion of 2-phosphoglycerate and 3-phosphoglycerate. This Gloeothece citriformis (strain PCC 7424) (Cyanothece sp. (strain PCC 7424)) protein is 2,3-bisphosphoglycerate-dependent phosphoglycerate mutase.